The primary structure comprises 361 residues: Hydroxycarboxylate dehydrogenase B (361 aa).

NAD(+)-binding positions include histidine 48, 122-124 (GRI), 178-182 (LLDYA), histidine 234, asparagine 270, and 313-316 (GEWE).

Belongs to the LDH2/MDH2 oxidoreductase family.

The catalysed reaction is 2-hydroxyglutarate + NADP(+) = 2-oxoglutarate + NADPH + H(+). The enzyme catalyses 2-hydroxyglutarate + NAD(+) = 2-oxoglutarate + NADH + H(+). It carries out the reaction 3-phenyllactate + NADP(+) = 3-phenylpyruvate + NADPH + H(+). It catalyses the reaction 3-phenyllactate + NAD(+) = 3-phenylpyruvate + NADH + H(+). The catalysed reaction is (2R)-2-hydroxy-3-(4-hydroxyphenyl)propanoate + NAD(+) = 3-(4-hydroxyphenyl)pyruvate + NADH + H(+). The enzyme catalyses (2R)-2-hydroxy-3-(4-hydroxyphenyl)propanoate + NADP(+) = 3-(4-hydroxyphenyl)pyruvate + NADPH + H(+). It carries out the reaction (2R)-3-(3,4-dihydroxyphenyl)lactate + NADP(+) = 3-(3,4-dihydroxyphenyl)pyruvate + NADPH + H(+). It catalyses the reaction (2R)-3-(3,4-dihydroxyphenyl)lactate + NAD(+) = 3-(3,4-dihydroxyphenyl)pyruvate + NADH + H(+). In terms of biological role, catalyzes the NAD(P)H-dependent reduction of 2-oxoglutarate, phenylpyruvate and (4-hydroxyphenyl)pyruvate, leading to the respective 2-hydroxycarboxylate in vitro. Shows a preference for NADPH over NADH as a redox partner. Do not catalyze the reverse reactions. The chain is Hydroxycarboxylate dehydrogenase B from Escherichia coli O157:H7.